The following is a 228-amino-acid chain: NAD(P)H-quinone oxidoreductase subunit K, chloroplastic (228 aa).

Positions 43, 44, 108, and 139 each coordinate [4Fe-4S] cluster.

The protein belongs to the complex I 20 kDa subunit family. As to quaternary structure, NDH is composed of at least 16 different subunits, 5 of which are encoded in the nucleus. The cofactor is [4Fe-4S] cluster.

The protein localises to the plastid. Its subcellular location is the chloroplast thylakoid membrane. The enzyme catalyses a plastoquinone + NADH + (n+1) H(+)(in) = a plastoquinol + NAD(+) + n H(+)(out). It carries out the reaction a plastoquinone + NADPH + (n+1) H(+)(in) = a plastoquinol + NADP(+) + n H(+)(out). In terms of biological role, NDH shuttles electrons from NAD(P)H:plastoquinone, via FMN and iron-sulfur (Fe-S) centers, to quinones in the photosynthetic chain and possibly in a chloroplast respiratory chain. The immediate electron acceptor for the enzyme in this species is believed to be plastoquinone. Couples the redox reaction to proton translocation, and thus conserves the redox energy in a proton gradient. This Ceratophyllum demersum (Rigid hornwort) protein is NAD(P)H-quinone oxidoreductase subunit K, chloroplastic.